The primary structure comprises 204 residues: B9 domain-containing protein 1 (204 aa).

Residues 9–127 (FLLMITGQVE…TIPMFVPEST (119 aa)) form the C2 B9-type domain.

This sequence belongs to the B9D family. Part of the tectonic-like complex (also named B9 complex).

The protein localises to the cytoplasm. It is found in the cytoskeleton. It localises to the cilium basal body. Functionally, component of the tectonic-like complex, a complex localized at the transition zone of primary cilia and acting as a barrier that prevents diffusion of transmembrane proteins between the cilia and plasma membranes. Required for ciliogenesis and sonic hedgehog/SHH signaling. The sequence is that of B9 domain-containing protein 1 (B9d1) from Mus musculus (Mouse).